Consider the following 339-residue polypeptide: Fructose-1,6-bisphosphatase, cytosolic (339 aa).

Mg(2+) contacts are provided by glutamate 71, glutamate 100, aspartate 121, leucine 123, and aspartate 124. Residues 124-127, asparagine 215, tyrosine 247, tyrosine 267, and lysine 277 each bind substrate; that span reads DGSS. Glutamate 283 contributes to the Mg(2+) binding site.

It belongs to the FBPase class 1 family. It depends on Mg(2+) as a cofactor.

The protein localises to the cytoplasm. It catalyses the reaction beta-D-fructose 1,6-bisphosphate + H2O = beta-D-fructose 6-phosphate + phosphate. The chain is Fructose-1,6-bisphosphatase, cytosolic from Oryza sativa subsp. indica (Rice).